We begin with the raw amino-acid sequence, 426 residues long: Enolase (426 aa).

Gln-165 serves as a coordination point for (2R)-2-phosphoglycerate. Residue Glu-209 is the Proton donor of the active site. Positions 244, 287, and 313 each coordinate Mg(2+). 4 residues coordinate (2R)-2-phosphoglycerate: Lys-338, Arg-367, Ser-368, and Lys-389. Lys-338 acts as the Proton acceptor in catalysis.

This sequence belongs to the enolase family. The cofactor is Mg(2+).

It localises to the cytoplasm. The protein localises to the secreted. Its subcellular location is the cell surface. It carries out the reaction (2R)-2-phosphoglycerate = phosphoenolpyruvate + H2O. The protein operates within carbohydrate degradation; glycolysis; pyruvate from D-glyceraldehyde 3-phosphate: step 4/5. Its function is as follows. Catalyzes the reversible conversion of 2-phosphoglycerate (2-PG) into phosphoenolpyruvate (PEP). It is essential for the degradation of carbohydrates via glycolysis. The protein is Enolase of Methanococcus maripaludis (strain C5 / ATCC BAA-1333).